A 477-amino-acid polypeptide reads, in one-letter code: Glycogen synthase (477 aa).

K15 lines the ADP-alpha-D-glucose pocket.

This sequence belongs to the glycosyltransferase 1 family. Bacterial/plant glycogen synthase subfamily.

It catalyses the reaction [(1-&gt;4)-alpha-D-glucosyl](n) + ADP-alpha-D-glucose = [(1-&gt;4)-alpha-D-glucosyl](n+1) + ADP + H(+). It functions in the pathway glycan biosynthesis; glycogen biosynthesis. In terms of biological role, synthesizes alpha-1,4-glucan chains using ADP-glucose. The chain is Glycogen synthase from Serratia proteamaculans (strain 568).